The chain runs to 288 residues: UTP--glucose-1-phosphate uridylyltransferase (288 aa).

This sequence belongs to the UDPGP type 2 family.

It carries out the reaction alpha-D-glucose 1-phosphate + UTP + H(+) = UDP-alpha-D-glucose + diphosphate. It functions in the pathway glycolipid metabolism; diglucosyl-diacylglycerol biosynthesis. Its function is as follows. Catalyzes the formation of UDP-glucose from glucose-1-phosphate and UTP. This is an intermediate step in the biosynthesis of diglucosyl-diacylglycerol (Glc2-DAG), i.e. a glycolipid found in the membrane, which is also used as a membrane anchor for lipoteichoic acid (LTA). This is UTP--glucose-1-phosphate uridylyltransferase (gtaB) from Staphylococcus haemolyticus (strain JCSC1435).